The chain runs to 169 residues: Disulfide bond formation protein B 1 (169 aa).

Residues 1–14 (MSDNTLYLRREKRF) are Cytoplasmic-facing. The chain crosses the membrane as a helical span at residues 15 to 31 (LVLLGIICLALIGGALY). Residues 32 to 49 (MQVVLDEAPCPLCILQRY) lie on the Periplasmic side of the membrane. The cysteines at positions 41 and 44 are disulfide-linked. A helical membrane pass occupies residues 50–65 (ALLFIAIFAFIGAAMP). Over 66–72 (GRRSVTA) the chain is Cytoplasmic. A helical membrane pass occupies residues 73 to 89 (FETLVTLSALGGIAAAG). Topologically, residues 90-144 (RHVWILAHPSDSCGIDVLQPIVDGLPLATLFPTGFQVSGFCTTPYPPVLGLSLAQ) are periplasmic. Cys-102 and Cys-130 are joined by a disulfide. A helical transmembrane segment spans residues 145–163 (WALTAFVLTAVLVPACIIR). Over 164–169 (NRRKPY) the chain is Cytoplasmic.

This sequence belongs to the DsbB family.

It is found in the cell inner membrane. In terms of biological role, required for disulfide bond formation in some periplasmic proteins. Acts by oxidizing the DsbA protein. This chain is Disulfide bond formation protein B 1, found in Pseudomonas syringae pv. syringae (strain B728a).